The sequence spans 127 residues: MAQSVPPGDIQTQPGTKIVFNAPYDDKHTYHIKVINSSARRIGYGIKTTNMKRLGVDPPCGVLDPKEAVFLAVSCDAFAFGQEDTNNDRITVEWTNTPDGAAKQFRREWFQGDGMVRRKNLPIEYNP.

The residue at position 2 (alanine 2) is an N-acetylalanine. An MSP domain is found at 9 to 126 (DIQTQPGTKI…RRKNLPIEYN (118 aa)).

Sperm.

It is found in the cell projection. The protein localises to the pseudopodium. The protein resides in the cytoplasm. It localises to the cytoskeleton. Its function is as follows. Central component in molecular interactions underlying sperm crawling. Forms an extensive filament system that extends from sperm villipoda, along the leading edge of the pseudopod. This chain is Major sperm protein 33 (msp-33), found in Caenorhabditis elegans.